The following is a 793-amino-acid chain: DnaJ homolog subfamily C member 10 (793 aa).

The N-terminal stretch at 1–32 (MGVWLSKDDYIRDLKRIILCFLIVYMAILVGT) is a signal peptide. In terms of domain architecture, J spans 35 to 100 (DFYSLLGVSK…DLRKKYDKYG (66 aa)). A Thioredoxin 1 domain is found at 130–232 (EIITLERREF…ESLVSFAMQH (103 aa)). An intrachain disulfide couples Cys-158 to Cys-161. Trxb stretches follow at residues 235 to 350 (STVT…LPDF) and 348 to 463 (PDFE…PQNF). 3 Thioredoxin domains span residues 454-553 (HVTT…IEDL), 557-662 (SVVS…SLRI), and 671-778 (VSTG…INEK). Cys-480 and Cys-483 are joined by a disulfide. An N-linked (GlcNAc...) asparagine glycan is attached at Asn-530. 2 disulfide bridges follow: Cys-588–Cys-591 and Cys-700–Cys-703. The short motif at 790–793 (KDEL) is the Prevents secretion from ER element.

In terms of assembly, interacts with HSPA5 (via its J domain). Interacts with EDEM1.

The protein resides in the endoplasmic reticulum lumen. In terms of biological role, endoplasmic reticulum disulfide reductase involved both in the correct folding of proteins and degradation of misfolded proteins. Required for efficient folding of proteins in the endoplasmic reticulum by catalyzing the removal of non-native disulfide bonds formed during the folding of proteins, such as LDLR. Also involved in endoplasmic reticulum-associated degradation (ERAD) by reducing incorrect disulfide bonds in misfolded glycoproteins recognized by EDEM1. Interaction with HSPA5 is required its activity, not for the disulfide reductase activity, but to facilitate the release of DNAJC10 from its substrate. Promotes apoptotic signaling pathway in response to endoplasmic reticulum stress. This chain is DnaJ homolog subfamily C member 10 (DNAJC10), found in Pongo abelii (Sumatran orangutan).